We begin with the raw amino-acid sequence, 200 residues long: uncharacterized protein (200 aa).

This is an uncharacterized protein from Ureaplasma parvum serovar 3 (strain ATCC 700970).